The following is a 322-amino-acid chain: Undecaprenyl-phosphate 4-deoxy-4-formamido-L-arabinose transferase (322 aa).

Residues 1 to 235 (MFEIHPVKKV…TCLTTTPLRM (235 aa)) are Cytoplasmic-facing. A helical transmembrane segment spans residues 236-256 (LSLLGSIIAIGGFSIAVLLVI). At 257-269 (LRLTFGPQWAAEG) the chain is on the periplasmic side. A helical membrane pass occupies residues 270–290 (VFMLFAVLFTFIGAQFIGMGL). Topologically, residues 291-322 (LGEYIGRIYTDVRARPRYFVQQVIRPSSKENE) are cytoplasmic.

This sequence belongs to the glycosyltransferase 2 family.

It localises to the cell inner membrane. It carries out the reaction UDP-4-deoxy-4-formamido-beta-L-arabinose + di-trans,octa-cis-undecaprenyl phosphate = 4-deoxy-4-formamido-alpha-L-arabinopyranosyl di-trans,octa-cis-undecaprenyl phosphate + UDP. The protein operates within glycolipid biosynthesis; 4-amino-4-deoxy-alpha-L-arabinose undecaprenyl phosphate biosynthesis; 4-amino-4-deoxy-alpha-L-arabinose undecaprenyl phosphate from UDP-4-deoxy-4-formamido-beta-L-arabinose and undecaprenyl phosphate: step 1/2. Its pathway is bacterial outer membrane biogenesis; lipopolysaccharide biosynthesis. Functionally, catalyzes the transfer of 4-deoxy-4-formamido-L-arabinose from UDP to undecaprenyl phosphate. The modified arabinose is attached to lipid A and is required for resistance to polymyxin and cationic antimicrobial peptides. This chain is Undecaprenyl-phosphate 4-deoxy-4-formamido-L-arabinose transferase, found in Shigella dysenteriae serotype 1 (strain Sd197).